The primary structure comprises 208 residues: Small ribosomal subunit protein uS4 (208 aa).

The S4 RNA-binding domain occupies 98–163 (QRLDNVVYRM…NPQITRAIEL (66 aa)).

The protein belongs to the universal ribosomal protein uS4 family. Part of the 30S ribosomal subunit. Contacts protein S5. The interaction surface between S4 and S5 is involved in control of translational fidelity.

Its function is as follows. One of the primary rRNA binding proteins, it binds directly to 16S rRNA where it nucleates assembly of the body of the 30S subunit. Functionally, with S5 and S12 plays an important role in translational accuracy. The protein is Small ribosomal subunit protein uS4 of Campylobacter jejuni subsp. jejuni serotype O:6 (strain 81116 / NCTC 11828).